The sequence spans 515 residues: RNA exonuclease NGL2 (515 aa).

Disordered regions lie at residues 1 to 54 and 353 to 381; these read MTQD…SKPI and RDGE…PVPE. Basic and acidic residues predominate over residues 21 to 34; the sequence is EINKSVKDAKHQTN. The span at 40–52 shows a compositional bias: basic residues; that stretch reads QHKKKGKKGKKSK. A compositionally biased stretch (basic and acidic residues) spans 369–381; sequence KYGKDQPESPVPE.

This sequence belongs to the CCR4/nocturin family.

It is found in the cytoplasm. Its subcellular location is the nucleus. In terms of biological role, involved in pre-rRNA processing. Required for the final stage of 3'-end maturation of 5.8S rRNA at site E. The protein is RNA exonuclease NGL2 (NGL2) of Saccharomyces cerevisiae (strain ATCC 204508 / S288c) (Baker's yeast).